A 283-amino-acid chain; its full sequence is NAD kinase (283 aa).

Asp66 acts as the Proton acceptor in catalysis. NAD(+) contacts are provided by residues 66 to 67 (DG), 137 to 138 (ND), Arg165, Asp167, and 178 to 183 (TGYSLS).

It belongs to the NAD kinase family. A divalent metal cation serves as cofactor.

The protein resides in the cytoplasm. The catalysed reaction is NAD(+) + ATP = ADP + NADP(+) + H(+). Functionally, involved in the regulation of the intracellular balance of NAD and NADP, and is a key enzyme in the biosynthesis of NADP. Catalyzes specifically the phosphorylation on 2'-hydroxyl of the adenosine moiety of NAD to yield NADP. The sequence is that of NAD kinase from Chloroherpeton thalassium (strain ATCC 35110 / GB-78).